We begin with the raw amino-acid sequence, 466 residues long: tRNA-2-methylthio-N(6)-dimethylallyladenosine synthase (466 aa).

The MTTase N-terminal domain maps to Arg22–Tyr139. Positions 31, 67, 101, 166, 170, and 173 each coordinate [4Fe-4S] cluster. The Radical SAM core domain maps to Ser152–Glu386. The 61-residue stretch at Ala389–Leu449 folds into the TRAM domain.

This sequence belongs to the methylthiotransferase family. MiaB subfamily. Monomer. [4Fe-4S] cluster serves as cofactor.

It is found in the cytoplasm. It catalyses the reaction N(6)-dimethylallyladenosine(37) in tRNA + (sulfur carrier)-SH + AH2 + 2 S-adenosyl-L-methionine = 2-methylsulfanyl-N(6)-dimethylallyladenosine(37) in tRNA + (sulfur carrier)-H + 5'-deoxyadenosine + L-methionine + A + S-adenosyl-L-homocysteine + 2 H(+). Its function is as follows. Catalyzes the methylthiolation of N6-(dimethylallyl)adenosine (i(6)A), leading to the formation of 2-methylthio-N6-(dimethylallyl)adenosine (ms(2)i(6)A) at position 37 in tRNAs that read codons beginning with uridine. The chain is tRNA-2-methylthio-N(6)-dimethylallyladenosine synthase from Chloroflexus aurantiacus (strain ATCC 29366 / DSM 635 / J-10-fl).